A 448-amino-acid chain; its full sequence is Glutamyl-tRNA reductase (448 aa).

Substrate contacts are provided by residues 52–55 (TCNR), Ser105, 110–112 (EDQ), and Gln116. Cys53 functions as the Nucleophile in the catalytic mechanism. 184–189 (GAGEMG) lines the NADP(+) pocket. The segment at 406–435 (DPDFGGPDQATPPEFTKGMSVEDIPDGMRD) is disordered.

The protein belongs to the glutamyl-tRNA reductase family. Homodimer.

The enzyme catalyses (S)-4-amino-5-oxopentanoate + tRNA(Glu) + NADP(+) = L-glutamyl-tRNA(Glu) + NADPH + H(+). The protein operates within porphyrin-containing compound metabolism; protoporphyrin-IX biosynthesis; 5-aminolevulinate from L-glutamyl-tRNA(Glu): step 1/2. Catalyzes the NADPH-dependent reduction of glutamyl-tRNA(Glu) to glutamate 1-semialdehyde (GSA). This is Glutamyl-tRNA reductase from Haloarcula marismortui (strain ATCC 43049 / DSM 3752 / JCM 8966 / VKM B-1809) (Halobacterium marismortui).